The chain runs to 341 residues: D-aspartate oxidase (341 aa).

M1 is subject to Blocked amino end (Met). Positions 36, 37, 43, 44, 50, 307, and 311 each coordinate FAD. A Microbody targeting signal motif is present at residues 339-341 (SKL).

This sequence belongs to the DAMOX/DASOX family. As to quaternary structure, monomer. Interacts with PEX5; the interaction is direct and required for localization of DDO to the peroxisome. It depends on FAD as a cofactor. As to expression, in the kidney, expressed in epithelial cells of the proximal tubules and in the liver (at protein level).

Its subcellular location is the peroxisome matrix. The protein localises to the cytoplasm. It is found in the cytosol. The enzyme catalyses D-aspartate + O2 + H2O = oxaloacetate + H2O2 + NH4(+). It carries out the reaction D-glutamate + O2 + H2O = H2O2 + 2-oxoglutarate + NH4(+). Inhibited by phenylglyoxal; chemical modification of arginine residues in the enzyme with phenylglyoxal leads to the irreversible loss of activity towards dicarboxylic D-amino acids, paralleled by a transient appearance of activity versus monocarboxylic ones. Selectively catalyzes the oxidative deamination of acidic amino acids. Suppresses the level of D-aspartate in the brain, an amino acid that can act as an agonist for glutamate receptors. Protects the organism from the toxicity of D-amino acids. May also function in the intestine. This Bos taurus (Bovine) protein is D-aspartate oxidase (DDO).